A 236-amino-acid chain; its full sequence is Sugar fermentation stimulation protein homolog (236 aa).

This sequence belongs to the SfsA family.

The sequence is that of Sugar fermentation stimulation protein homolog from Synechococcus elongatus (strain ATCC 33912 / PCC 7942 / FACHB-805) (Anacystis nidulans R2).